The following is a 546-amino-acid chain: Alkaline phosphatase PafA (546 aa).

The N-terminal stretch at 1 to 25 is a signal peptide; that stretch reads MLTPKKWLLGVLVVSGMLGAQKTNA. Residues Asp38 and Thr79 each coordinate Zn(2+). Thr79 functions as the Phosphothreonine intermediate in the catalytic mechanism. Residues Asn100 and 162 to 164 contribute to the substrate site; that span reads KDR. Positions 305, 309, 352, 353, and 486 each coordinate Zn(2+).

The cofactor is Zn(2+).

The protein resides in the periplasm. The catalysed reaction is a phosphate monoester + H2O = an alcohol + phosphate. With respect to regulation, strongly inhibited by orthovanadate and EDTA. Also inhibited by inorganic phosphate. Functionally, alkaline phosphatase with broad substrate specificity. Has phosphatase activity towards nucleotide phosphates with a preference for ATP. Active towards a great variety of phosphomonoesters with the exception of 2',3'-cyclic AMP and myo-inositol hexakisphosphate. The protein is Alkaline phosphatase PafA of Elizabethkingia meningoseptica (Chryseobacterium meningosepticum).